We begin with the raw amino-acid sequence, 447 residues long: Serine/threonine-protein phosphatase 2A 55 kDa regulatory subunit B gamma isoform (447 aa).

WD repeat units follow at residues 22-61 (TEADIISTVEFNHTGELLATGDKGGRVVIFQREPESKNAP), 87-128 (EIEE…KRPE), 171-209 (GHTYHINSISVNSDCETYMSADDLRINLWHLAVTDRSFN), 220-260 (DLTE…LCDK), 279-317 (EIISSVSDVKFSHSGRYMLTRDYLTVKVWDLNMEARPIE), 334-375 (ENDC…DVTL), and 410-446 (DFTKKILHTAWHPAENIIAIAATNNLYIFQDKVNSDV).

It belongs to the phosphatase 2A regulatory subunit B family. In terms of assembly, PP2A consists of a common heterodimeric core enzyme, composed of a 36 kDa catalytic subunit (subunit C) and a 65 kDa constant regulatory subunit (PR65 or subunit A), that associates with a variety of regulatory subunits. Proteins that associate with the core dimer include three families of regulatory subunits B (the R2/B/PR55/B55, R3/B''/PR72/PR130/PR59 and R5/B'/B56 families), the 48 kDa variable regulatory subunit, viral proteins, and cell signaling molecules. Interacts with IER5. Highly expressed in brain.

The B regulatory subunit might modulate substrate selectivity and catalytic activity, and might also direct the localization of the catalytic enzyme to a particular subcellular compartment. This is Serine/threonine-protein phosphatase 2A 55 kDa regulatory subunit B gamma isoform (PPP2R2C) from Oryctolagus cuniculus (Rabbit).